The sequence spans 233 residues: MANESEIQKTENAEVANAANGTNPNNERRGRGGRGRGGRGRDGRGRRDDRRNEEAGEELIEKLVHINRVSKTVKGGKRFGFAALVVVGDGKGRVGFGHGKAREVPEAISKATAAAKKTMIRVPLREGRTLHHDGRGRFGAGLVYLRSAPSGTGIIAGGPMRAIFESLGVADVVTKSVGTSNPYNMIRATFEALNDQKSPKAVAQRRGKRIADLFGRGGASAAKAEAEAAAVVE.

Basic and acidic residues-rich tracts occupy residues 1 to 12 (MANESEIQKTEN) and 39 to 54 (RGRDGRGRRDDRRNEE). The interval 1–54 (MANESEIQKTENAEVANAANGTNPNNERRGRGGRGRGGRGRDGRGRRDDRRNEE) is disordered. In terms of domain architecture, S5 DRBM spans 59-122 (LIEKLVHINR…AAAKKTMIRV (64 aa)).

Belongs to the universal ribosomal protein uS5 family. In terms of assembly, part of the 30S ribosomal subunit. Contacts proteins S4 and S8.

Functionally, with S4 and S12 plays an important role in translational accuracy. Its function is as follows. Located at the back of the 30S subunit body where it stabilizes the conformation of the head with respect to the body. The protein is Small ribosomal subunit protein uS5 of Zymomonas mobilis subsp. mobilis (strain ATCC 31821 / ZM4 / CP4).